A 338-amino-acid polypeptide reads, in one-letter code: DNA-directed RNA polymerase subunit alpha (338 aa).

The segment at 1-225 is alpha N-terminal domain (alpha-NTD); it reads MLISQRPTLT…ELFGLARELN (225 aa). The tract at residues 242–338 is alpha C-terminal domain (alpha-CTD); that stretch reads YIAAYGMPIE…YIDTDPEETE (97 aa). The interval 314–338 is disordered; that stretch reads FDPTQLDGYDAATGDYIDTDPEETE.

This sequence belongs to the RNA polymerase alpha chain family. Homodimer. The RNAP catalytic core consists of 2 alpha, 1 beta, 1 beta' and 1 omega subunit. When a sigma factor is associated with the core the holoenzyme is formed, which can initiate transcription.

The enzyme catalyses RNA(n) + a ribonucleoside 5'-triphosphate = RNA(n+1) + diphosphate. In terms of biological role, DNA-dependent RNA polymerase catalyzes the transcription of DNA into RNA using the four ribonucleoside triphosphates as substrates. The sequence is that of DNA-directed RNA polymerase subunit alpha from Corynebacterium diphtheriae (strain ATCC 700971 / NCTC 13129 / Biotype gravis).